A 161-amino-acid chain; its full sequence is CASP-like protein 1C2 (161 aa).

The Cytoplasmic portion of the chain corresponds to 1–7 (MAKNTDR). A helical membrane pass occupies residues 8–28 (ICFLVLRLLAFGATLSAAIVM). Topologically, residues 29 to 53 (ATSHERTTYLSLSIEAKYSHTPAFK) are extracellular. A helical transmembrane segment spans residues 54-74 (YFVIANAIGSAYSLLLLFLPS). Topologically, residues 75–86 (HGSLWPLVIASD) are cytoplasmic. A helical transmembrane segment spans residues 87-107 (VVITMFLTSSISAALSIAYVG). Over 108–131 (KKGNSYAGWLPICDQVPNYCNHVT) the chain is Extracellular. A helical membrane pass occupies residues 132-152 (GALAAGFIGVVLYMVLLQYSI). Topologically, residues 153–161 (YTKCCKSSS) are cytoplasmic.

This sequence belongs to the Casparian strip membrane proteins (CASP) family. Homodimer and heterodimers.

The protein resides in the cell membrane. The polypeptide is CASP-like protein 1C2 (Vitis vinifera (Grape)).